The sequence spans 310 residues: Carbamate kinase 1 (310 aa).

The protein belongs to the carbamate kinase family.

It localises to the cytoplasm. It catalyses the reaction hydrogencarbonate + NH4(+) + ATP = carbamoyl phosphate + ADP + H2O + H(+). It functions in the pathway metabolic intermediate metabolism; carbamoyl phosphate degradation; CO(2) and NH(3) from carbamoyl phosphate: step 1/1. In Staphylococcus aureus (strain bovine RF122 / ET3-1), this protein is Carbamate kinase 1 (arcC1).